Consider the following 584-residue polypeptide: Cilia- and flagella-associated protein 184 (584 aa).

3 stretches are compositionally biased toward basic and acidic residues: residues 1–18 (MDSH…EEGL), 42–57 (PEPK…REPE), and 67–82 (SKAK…HVEV). Positions 1–243 (MDSHYGDIEG…ASTEEFEWTA (243 aa)) are disordered. Residues 119–146 (DKDEDEDEDEDEDEDEDEDEDEDEDEGE) show a composition bias toward acidic residues. Over residues 189–232 (AKEKARESLKKRDSEEIEGTDRERHKSTEEQLHPGEAKEEEKQK) the composition is skewed to basic and acidic residues. Coiled-coil stretches lie at residues 317–470 (LAML…SNVQ) and 530–561 (LLGK…KRHH).

Belongs to the CFAP184 family. In terms of assembly, forms a complex with CFAP263; the interaction is required for functional activity in cilia.

It is found in the cell projection. Its subcellular location is the cilium. It localises to the cytoplasm. The protein resides in the cytoskeleton. The protein localises to the microtubule organizing center. It is found in the centrosome. Its function is as follows. In complex with CFAP263, acts as a regulator of ciliary beating that connects radial spoke 3 (RS3) to the inner dynein arm (IDA) and the nexin-dynein regulatory complex (N-DRC). The complex is positioned parallel to N-DRC and forms a connection between the arch at the base of RS3, the IDA tail and N-DRC. This Mus musculus (Mouse) protein is Cilia- and flagella-associated protein 184 (Cfap184).